Reading from the N-terminus, the 407-residue chain is Probable tRNA sulfurtransferase (407 aa).

The THUMP domain occupies 61 to 165; it reads NEITYRLSKI…LDAIYMYEEV (105 aa). ATP-binding positions include 183-184, 208-209, Arg265, Gly287, and Gln296; these read ML and HF.

The protein belongs to the ThiI family.

The protein resides in the cytoplasm. The enzyme catalyses [ThiI sulfur-carrier protein]-S-sulfanyl-L-cysteine + a uridine in tRNA + 2 reduced [2Fe-2S]-[ferredoxin] + ATP + H(+) = [ThiI sulfur-carrier protein]-L-cysteine + a 4-thiouridine in tRNA + 2 oxidized [2Fe-2S]-[ferredoxin] + AMP + diphosphate. It catalyses the reaction [ThiS sulfur-carrier protein]-C-terminal Gly-Gly-AMP + S-sulfanyl-L-cysteinyl-[cysteine desulfurase] + AH2 = [ThiS sulfur-carrier protein]-C-terminal-Gly-aminoethanethioate + L-cysteinyl-[cysteine desulfurase] + A + AMP + 2 H(+). Its pathway is cofactor biosynthesis; thiamine diphosphate biosynthesis. Functionally, catalyzes the ATP-dependent transfer of a sulfur to tRNA to produce 4-thiouridine in position 8 of tRNAs, which functions as a near-UV photosensor. Also catalyzes the transfer of sulfur to the sulfur carrier protein ThiS, forming ThiS-thiocarboxylate. This is a step in the synthesis of thiazole, in the thiamine biosynthesis pathway. The sulfur is donated as persulfide by IscS. The chain is Probable tRNA sulfurtransferase from Staphylococcus aureus (strain Mu3 / ATCC 700698).